We begin with the raw amino-acid sequence, 161 residues long: Phenolic acid decarboxylase PadC (161 aa).

Substrate contacts are provided by Tyr-11 and Tyr-13. Tyr-19 acts as the Proton donor in catalysis. Arg-41 provides a ligand contact to substrate. Glu-64 functions as the Proton acceptor in the catalytic mechanism.

Belongs to the PadC family. As to quaternary structure, homodimer.

The enzyme catalyses (E)-4-coumarate + H(+) = 4-vinylphenol + CO2. It carries out the reaction (E)-cinnamate + H(+) = styrene + CO2. The catalysed reaction is (E)-ferulate + H(+) = 2-methoxy-4-vinylphenol + CO2. Functionally, involved in the decarboxylation and detoxification of phenolic derivatives. It is able to catalyze the decarboxylation of ferulic, p-coumaric and caffeic acids. In Bacillus subtilis (strain 168), this protein is Phenolic acid decarboxylase PadC (padC).